The sequence spans 319 residues: Acetyl esterase (319 aa).

The Involved in the stabilization of the negatively charged intermediate by the formation of the oxyanion hole motif lies at 91 to 93; sequence HGG. Active-site residues include S165, D262, and H292.

It belongs to the 'GDXG' lipolytic enzyme family. In terms of assembly, homodimer. Interacts with MalT and MelA.

It localises to the cytoplasm. Functionally, displays esterase activity towards short chain fatty esters (acyl chain length of up to 8 carbons). Able to hydrolyze triacetylglycerol (triacetin) and tributyrylglycerol (tributyrin), but not trioleylglycerol (triolein) or cholesterol oleate. Negatively regulates MalT activity by antagonizing maltotriose binding. Inhibits MelA galactosidase activity. This Escherichia coli O7:K1 (strain IAI39 / ExPEC) protein is Acetyl esterase.